Reading from the N-terminus, the 235-residue chain is TVP38/TMEM64 family inner membrane protein YdjZ (235 aa).

Topologically, residues 1-13 (MMMMQSRKIWYYR) are periplasmic. The helical transmembrane segment at 14 to 34 (ITLIILLFAMLLAWALLPGVH) threads the bilayer. The Cytoplasmic portion of the chain corresponds to 35 to 64 (EFINRSVAAFAAVDQQGIERFIQSYGALAA). The helical transmembrane segment at 65-85 (VVSFLLMILQAIAAPLPAFLI) threads the bilayer. Residues 86–95 (TFANASLFGA) lie on the Periplasmic side of the membrane. Residues 90–199 (ASLFGAFWGG…IVYSWAGSML (110 aa)) are VTT domain. Residues 96–116 (FWGGLLSWTSSMAGAALCFFI) traverse the membrane as a helical segment. Residues 117-176 (ARVMGREVVEKLTGKTVLDSMDGFFTRYGKHTILVCRLLPFVPFDPISYAAGLTSIRFRS) are Cytoplasmic-facing. Residues 177 to 197 (FFIATGLGQLPATIVYSWAGS) traverse the membrane as a helical segment. Over 198-202 (MLTGG) the chain is Periplasmic. The helical transmembrane segment at 203–223 (TFWFVTGLFILFALTVVIFMA) threads the bilayer. The Cytoplasmic segment spans residues 224–235 (KKIWLERQKRNA).

Belongs to the TVP38/TMEM64 family.

It localises to the cell inner membrane. This is TVP38/TMEM64 family inner membrane protein YdjZ (ydjZ) from Escherichia coli (strain K12).